Consider the following 860-residue polypeptide: Leucine--tRNA ligase (860 aa).

Residues P42 to H52 carry the 'HIGH' region motif. The 'KMSKS' region motif lies at K619–S623. Position 622 (K622) interacts with ATP.

The protein belongs to the class-I aminoacyl-tRNA synthetase family.

It localises to the cytoplasm. It carries out the reaction tRNA(Leu) + L-leucine + ATP = L-leucyl-tRNA(Leu) + AMP + diphosphate. In Histophilus somni (strain 129Pt) (Haemophilus somnus), this protein is Leucine--tRNA ligase.